The sequence spans 157 residues: Oocyte zinc finger protein XlCOF2 (157 aa).

5 C2H2-type zinc fingers span residues 6 to 28, 34 to 56, 79 to 101, 107 to 129, and 135 to 157; these read FTCT…MRIH, YSCA…QKNP, FTCT…QRLH, FSCA…QNTH, and FTCT…QKIH.

The protein belongs to the krueppel C2H2-type zinc-finger protein family.

The protein resides in the nucleus. Functionally, may be involved in transcriptional regulation. This Xenopus laevis (African clawed frog) protein is Oocyte zinc finger protein XlCOF2.